Consider the following 759-residue polypeptide: 5-methyltetrahydropteroyltriglutamate--homocysteine methyltransferase (759 aa).

5-methyltetrahydropteroyltri-L-glutamate is bound by residues 17 to 20 and Lys116; that span reads RELK. L-homocysteine contacts are provided by residues 430 to 432 and Glu483; that span reads IGS. Residues 430 to 432 and Glu483 each bind L-methionine; that span reads IGS. 5-methyltetrahydropteroyltri-L-glutamate contacts are provided by residues 514 to 515 and Trp560; that span reads RC. Asp598 is a binding site for L-homocysteine. L-methionine is bound at residue Asp598. 5-methyltetrahydropteroyltri-L-glutamate is bound at residue Glu604. 3 residues coordinate Zn(2+): His641, Cys643, and Glu665. Catalysis depends on His694, which acts as the Proton donor. Residue Cys726 participates in Zn(2+) binding.

It belongs to the vitamin-B12 independent methionine synthase family. Requires Zn(2+) as cofactor.

It catalyses the reaction 5-methyltetrahydropteroyltri-L-glutamate + L-homocysteine = tetrahydropteroyltri-L-glutamate + L-methionine. It participates in amino-acid biosynthesis; L-methionine biosynthesis via de novo pathway; L-methionine from L-homocysteine (MetE route): step 1/1. Functionally, catalyzes the transfer of a methyl group from 5-methyltetrahydrofolate to homocysteine resulting in methionine formation. The polypeptide is 5-methyltetrahydropteroyltriglutamate--homocysteine methyltransferase (Lactococcus lactis subsp. lactis (strain IL1403) (Streptococcus lactis)).